Here is a 451-residue protein sequence, read N- to C-terminus: Chromosomal replication initiator protein DnaA (451 aa).

A domain I, interacts with DnaA modulators region spans residues 1–101 (MTENETIFWN…TSNHIFSRQT (101 aa)). Residues 101 to 110 (TINSLPAITS) are domain II. Residues 111 to 329 (DLNPKYSFDN…GALKDISLVA (219 aa)) form a domain III, AAA+ region region. Residues Gly-155, Gly-157, Lys-158, and Thr-159 each contribute to the ATP site. The interval 330-451 (NFKEIDKITV…EIETIKNKIK (122 aa)) is domain IV, binds dsDNA.

The protein belongs to the DnaA family. Oligomerizes as a right-handed, spiral filament on DNA at oriC.

The protein resides in the cytoplasm. Its function is as follows. Plays an essential role in the initiation and regulation of chromosomal replication. ATP-DnaA binds to the origin of replication (oriC) to initiate formation of the DNA replication initiation complex once per cell cycle. Binds the DnaA box (a 9 base pair repeat at the origin) and separates the double-stranded (ds)DNA. Forms a right-handed helical filament on oriC DNA; dsDNA binds to the exterior of the filament while single-stranded (ss)DNA is stabiized in the filament's interior. The ATP-DnaA-oriC complex binds and stabilizes one strand of the AT-rich DNA unwinding element (DUE), permitting loading of DNA polymerase. After initiation quickly degrades to an ADP-DnaA complex that is not apt for DNA replication. Binds acidic phospholipids. The sequence is that of Chromosomal replication initiator protein DnaA from Streptococcus uberis (strain ATCC BAA-854 / 0140J).